The sequence spans 156 residues: Insulin (156 aa).

Positions 1–31 are cleaved as a signal peptide; it reads MSKFLLQSHSANACLLTLLLTLASNLDISLA. Intrachain disulfides connect cysteine 37/cysteine 114, cysteine 49/cysteine 119, cysteine 61/cysteine 128, and cysteine 112/cysteine 115. Positions 79-93 are cleaved as a propeptide — c peptide beta; it reads DTENVNDKLRGILLN. The propeptide at 96 to 102 is c peptide alpha; the sequence is EAFSYLT. The propeptide at 141–156 is d peptide; that stretch reads TGRSNSGHAQLEDNFS. Positions 144–156 are cleaved as a propeptide — d peptide short form; the sequence is SNSGHAQLEDNFS. Glutamate 152 carries the post-translational modification 4-carboxyglutamate.

This sequence belongs to the insulin family. As to quaternary structure, heterodimer of a B chain or a B chain' and an A chain probably linked by three disulfide bonds. In terms of tissue distribution, expressed in the central region of the cerebral ganglia mostly within the F and C clusters.

The protein resides in the secreted. Functionally, involved in glucose metabolism. The sequence is that of Insulin (PIN) from Aplysia californica (California sea hare).